The sequence spans 167 residues: S-ribosylhomocysteine lyase (167 aa).

The Fe cation site is built by histidine 54, histidine 58, and cysteine 128.

It belongs to the LuxS family. As to quaternary structure, homodimer. Fe cation serves as cofactor.

The catalysed reaction is S-(5-deoxy-D-ribos-5-yl)-L-homocysteine = (S)-4,5-dihydroxypentane-2,3-dione + L-homocysteine. In terms of biological role, involved in the synthesis of autoinducer 2 (AI-2) which is secreted by bacteria and is used to communicate both the cell density and the metabolic potential of the environment. The regulation of gene expression in response to changes in cell density is called quorum sensing. Catalyzes the transformation of S-ribosylhomocysteine (RHC) to homocysteine (HC) and 4,5-dihydroxy-2,3-pentadione (DPD). This is S-ribosylhomocysteine lyase from Haemophilus influenzae (strain PittGG).